A 242-amino-acid polypeptide reads, in one-letter code: Ras-like protein family member 11A (242 aa).

Residues 17–241 form a small GTPase-like region; it reads ESSSDYLLPK…SSKAKASSAL (225 aa). Residues 34–41, 81–88, and 147–150 each bind GTP; these read GAGCVGKS, DTPGGIQA, and NKGD.

The protein belongs to the small GTPase superfamily. Ras family. Interacts with UBF/UBTF.

The protein resides in the nucleus. It is found in the nucleolus. The enzyme catalyses GTP + H2O = GDP + phosphate + H(+). In terms of biological role, regulator of rDNA transcription. Acts in cooperation UBF/UBTF and positively regulates RNA polymerase I transcription. This Mus musculus (Mouse) protein is Ras-like protein family member 11A.